Reading from the N-terminus, the 643-residue chain is Cytoplasmic dynein 1 intermediate chain 1 (643 aa).

2 stretches are compositionally biased toward basic and acidic residues: residues M1–R13 and Q20–E60. Disordered regions lie at residues M1–S65 and M96–Q123. S2 is modified (N-acetylserine). The tract at residues S2–Q123 is interaction with DCTN1. A phosphoserine mark is found at S50 and S100. The segment covering M96–S107 has biased composition (low complexity). T105 bears the Phosphothreonine mark. A phosphoserine mark is found at S107 and S111. Residues K145–V161 form an interaction with DYNLT1 region. A disordered region spans residues E167–K219. T174 is modified (phosphothreonine). Phosphoserine occurs at positions 177 and 195. Basic and acidic residues predominate over residues V187–K219. WD repeat units lie at residues S283 to E332, H336 to V376, A385 to E426, S435 to G475, G480 to S525, D528 to T568, and E574 to N613. S633 carries the post-translational modification Phosphoserine.

Belongs to the dynein intermediate chain family. Homodimer. The cytoplasmic dynein 1 complex consists of two catalytic heavy chains (HCs) and a number of non-catalytic subunits presented by intermediate chains (ICs), light intermediate chains (LICs) and light chains (LCs); the composition seems to vary in respect to the IC, LIC and LC composition. The heavy chain homodimer serves as a scaffold for the probable homodimeric assembly of the respective non-catalytic subunits. The ICs and LICs bind directly to the HC dimer and the LCs assemble on the IC dimer. Isoform 1, isoform 2 and isoform 3 interact with DYNC1H1. Isoform 1, isoform 2 and isoform 3 interact with DYNLT3. Isoform 1, isoform 2 and isoform 3 interact with DYNLT1. Interacts with DCTN1. Interacts with MCRS1; the interaction is required for the proper distribution of centriolar satellites. High levels seen in the brain and testis, while a lower level expression is seen in the liver, spleen, kidney, lung, skeletal muscle and heart.

The protein resides in the cytoplasm. Its subcellular location is the chromosome. The protein localises to the centromere. It is found in the kinetochore. It localises to the cytoskeleton. The protein resides in the spindle pole. Functionally, acts as one of several non-catalytic accessory components of the cytoplasmic dynein 1 complex that are thought to be involved in linking dynein to cargos and to adapter proteins that regulate dynein function. Cytoplasmic dynein 1 acts as a motor for the intracellular retrograde motility of vesicles and organelles along microtubules. The intermediate chains mediate the binding of dynein to dynactin via its 150 kDa component (p150-glued) DCTN1. May play a role in mediating the interaction of cytoplasmic dynein with membranous organelles and kinetochores. The sequence is that of Cytoplasmic dynein 1 intermediate chain 1 (Dync1i1) from Rattus norvegicus (Rat).